A 305-amino-acid polypeptide reads, in one-letter code: tRNA dimethylallyltransferase (305 aa).

8–15 lines the ATP pocket; sequence GPTGTGKS. Position 10–15 (10–15) interacts with substrate; the sequence is TGTGKS.

This sequence belongs to the IPP transferase family. Monomer. The cofactor is Mg(2+).

The catalysed reaction is adenosine(37) in tRNA + dimethylallyl diphosphate = N(6)-dimethylallyladenosine(37) in tRNA + diphosphate. In terms of biological role, catalyzes the transfer of a dimethylallyl group onto the adenine at position 37 in tRNAs that read codons beginning with uridine, leading to the formation of N6-(dimethylallyl)adenosine (i(6)A). In Mycobacterium sp. (strain JLS), this protein is tRNA dimethylallyltransferase.